A 993-amino-acid polypeptide reads, in one-letter code: MDGGPRVPEQRRPGFPAEEEESGALRFGVLGPVRAWRDGETLATGSPQQRALLAALLLREGRTATAGELIDALWGEEPPSQALAAVRTYASRLRKVLDPGVLVSESGGYAVRGLAEGALDLARAQDLASAAEKARSAGDLCHARDLLRRALDLWDGEVLAGVPGPYAQTQRVRLGEWRLQLLETRLDMDLDQGCHAEAVSELTALTAAHPLRERLRELLMLALYRSGRQAEALAVYADTRRLLADELGVDPRPGLQELQQRILQADPALAELSAATAETATATLRPAQLPATVSDFTGRAAFVRELSDVLSAASGESASGRVMAVSALAGIGGVGKTTLAVHVAHRARAAFPDGQLYVDLQGAGARPAEPETVLGSFLRALGTADSAIPDSLEERAALYRSVLDGRRVLVLLDNARDAAQVRPLLPGTDGCAALVTARVRMVDLAGAHLVDLDVMAPEEALALFTKIVGEERVASERQAALDVVGACGFLPLAIRIAASRLAARRTWTVSVLAAKLADERRRLDELQAGDQAVEATFELGYGQLEPAQARAFRLLGLADGPDISLAAAAAVLDLPAQDTEDLLESLVDTSLLESAAPGRYRFHDLVRLYARACAERTERDGNAPSERGAALSRLLDFYLATAAGVYAIERPGDRLVDGLEPTEYPGLTFTEGSAALDWLYTEAAPLLACVRQSAGTARLRRAVDLLWAAKDLTESGANSHQYEATARAMCDATGSAADTRAEGRARTVLSDVLLVSGRIEHAEEEARLAMRLAGSAEDSAAVSWVANNRGLVCLHQRRYAEGKGLFHQAIAGFRATDNRAGEASALSNLSRAQLGMGNVAEAVDIARQGLAVYAELGRTMRLANGHFALGVALTRAGRHEEALGEFAEALDLFGDHRQRLWEGATNFRLAEVHLAAGRPSSAAQHAEQALALGCIGGDRMRGNVLALLGRALSALGQADRARACWREALSLYEQHDAQEVGEVRALLARSVAR.

A disordered region spans residues 1–21; that stretch reads MDGGPRVPEQRRPGFPAEEEE. A DNA-binding region (ompR/PhoB-type) is located at residues 17-113; sequence AEEEESGALR…SESGGYAVRG (97 aa). One can recognise an NB-ARC domain in the interval 280-579; that stretch reads ATATLRPAQL…AVLDLPAQDT (300 aa). ATP is bound at residue 330-337; that stretch reads GIGGVGKT. Residues 796-811 constitute a DNA-binding region (H-T-H motif); it reads QRRYAEGKGLFHQAIA. TPR repeat units follow at residues 823–856, 863–896, and 942–975; these read ASAL…YAEL, ANGH…FGDH, and GNVL…YEQH. Residues 974 to 988 constitute a DNA-binding region (H-T-H motif); it reads QHDAQEVGEVRALLA.

Belongs to the AfsR/DnrI/RedD regulatory family. Post-translationally, phosphorylated by AfsK.

In terms of biological role, global regulatory protein for secondary metabolite formation. The chain is Regulatory protein AfsR (afsR) from Streptomyces coelicolor (strain ATCC BAA-471 / A3(2) / M145).